The sequence spans 185 residues: Glycerol-3-phosphate acyltransferase 4 (185 aa).

6 helical membrane-spanning segments follow: residues 1-21, 47-67, 69-89, 113-133, 137-157, and 158-178; these read MPLLFVLLSYLLGTFPSAYLA, LGRGWGLAVFVFDLAKGSLAI, LALAAGLSPGWVMFCGLAAVL, LLIATQPMLIMGGLGLLVLLF, VIAASAVMFGLLWLAVILYGL, and PGGVVAYSIGLPVVVGLTHFI.

The protein belongs to the PlsY family. Probably interacts with PlsX.

It is found in the cell membrane. It catalyses the reaction an acyl phosphate + sn-glycerol 3-phosphate = a 1-acyl-sn-glycero-3-phosphate + phosphate. Its pathway is lipid metabolism; phospholipid metabolism. Its function is as follows. Catalyzes the transfer of an acyl group from acyl-phosphate (acyl-PO(4)) to glycerol-3-phosphate (G3P) to form lysophosphatidic acid (LPA). This enzyme utilizes acyl-phosphate as fatty acyl donor, but not acyl-CoA or acyl-ACP. The chain is Glycerol-3-phosphate acyltransferase 4 from Dehalococcoides mccartyi (strain ATCC BAA-2266 / KCTC 15142 / 195) (Dehalococcoides ethenogenes (strain 195)).